The primary structure comprises 220 residues: Fructose-6-phosphate aldolase (220 aa).

Residue Lys85 is the Schiff-base intermediate with substrate of the active site.

Belongs to the transaldolase family. Type 3A subfamily. As to quaternary structure, homodecamer.

Its subcellular location is the cytoplasm. It catalyses the reaction beta-D-fructose 6-phosphate = dihydroxyacetone + D-glyceraldehyde 3-phosphate. In terms of biological role, catalyzes the reversible formation of fructose 6-phosphate from dihydroxyacetone and D-glyceraldehyde 3-phosphate via an aldolization reaction. This is Fructose-6-phosphate aldolase from Salmonella typhi.